The chain runs to 182 residues: Plasmolipin (182 aa).

Topologically, residues 1–35 (MAEFPSKVSTRTSSPAQGVGASVSALRPDLGFVRS) are cytoplasmic. Position 9 is a phosphoserine (Ser-9). The 135-residue stretch at 32–166 (FVRSALGVLA…SAFFSFQAWR (135 aa)) folds into the MARVEL domain. Residues 36 to 56 (ALGVLALLQLALGLLVWALIA) traverse the membrane as a helical segment. The Extracellular portion of the chain corresponds to 57-68 (DTPYHLYPAYGW). A helical membrane pass occupies residues 69–89 (VMFVAVFLWLVTIVFFIIYLF). Residues 90 to 99 (QLHMKLYMVP) lie on the Cytoplasmic side of the membrane. The chain crosses the membrane as a helical span at residues 100-120 (WPLVLLIFFVAATVLYITAFI). Residues 121–141 (ACAAAVDLTSLRGSRPYNQRS) are Extracellular-facing. The chain crosses the membrane as a helical span at residues 142–162 (AASFFACLVMIAYGVSAFFSF). Over 163–182 (QAWRGVGSNAATSQMAGGYS) the chain is Cytoplasmic.

The protein belongs to the MAL family. In terms of assembly, forms oligomers. In terms of processing, phosphorylated.

Its subcellular location is the membrane. It is found in the cell membrane. The protein resides in the myelin membrane. The protein localises to the apical cell membrane. In terms of biological role, main component of the myelin sheath that plays an important role in myelin membrane biogenesis and myelination. Plays an essential function in apical endocytosis. Regulates epithelial development through the regulation of apical endocytosis. Part of the intracellular machinery that mediates basolateral-to-apical transport of ICAM-1, an essential adhesion receptor in epithelial cells, from the subapical compartment in hepatic epithelial cells. This chain is Plasmolipin (Pllp), found in Mus musculus (Mouse).